Reading from the N-terminus, the 277-residue chain is Methylamine utilization protein MauF (277 aa).

Transmembrane regions (helical) follow at residues 33–53 (IAVL…LASA), 59–79 (LWAV…WSPC), 111–131 (YGLG…IAGF), 132–152 (SGFG…YGAH), 179–199 (WVIG…YVQT), 205–225 (MTLA…VALF), and 257–277 (ALAD…LALI).

Its subcellular location is the cell membrane. It participates in one-carbon metabolism; methylamine degradation. The polypeptide is Methylamine utilization protein MauF (mauF) (Paracoccus denitrificans).